Reading from the N-terminus, the 169-residue chain is Ribosome maturation factor RimP (169 aa).

The protein belongs to the RimP family.

It is found in the cytoplasm. Functionally, required for maturation of 30S ribosomal subunits. This is Ribosome maturation factor RimP from Streptomyces avermitilis (strain ATCC 31267 / DSM 46492 / JCM 5070 / NBRC 14893 / NCIMB 12804 / NRRL 8165 / MA-4680).